The following is a 375-amino-acid chain: Prophage integrase IntE (375 aa).

The Core-binding (CB) domain maps to 82–167; sequence ITTSTWLDRY…VLIDVFKEAQ (86 aa). The Tyr recombinase domain maps to 189 to 375; that stretch reads ITRQRLSLEE…RGKGWSKVAL (187 aa). Residues R226, K249, H330, R333, and H353 contribute to the active site. The interval 350-375 is disordered; that stretch reads LLGHKTQQQTDRYHDDRGKGWSKVAL. Y362 (O-(3'-phospho-DNA)-tyrosine intermediate) is an active-site residue.

This sequence belongs to the 'phage' integrase family.

Its function is as follows. Integrase from the cryptic lambdoid prophage e14. Integrase is necessary for integration of the phage into the host genome by site-specific recombination. In conjunction with excisionase, integrase is also necessary for excision of the prophage from the host genome. This chain is Prophage integrase IntE (intE), found in Escherichia coli (strain K12).